The following is a 440-amino-acid chain: tRNA-2-methylthio-N(6)-dimethylallyladenosine synthase (440 aa).

The 117-residue stretch at 5-121 (KLLYLETFGC…LPELVRAAEK (117 aa)) folds into the MTTase N-terminal domain. Positions 14, 50, 84, 159, 163, and 166 each coordinate [4Fe-4S] cluster. The 231-residue stretch at 145 to 375 (RTDGVSRFVT…LDLQRRITLE (231 aa)) folds into the Radical SAM core domain. One can recognise a TRAM domain in the interval 378-440 (KSFVGTVQQV…QNSLQGELCR (63 aa)).

This sequence belongs to the methylthiotransferase family. MiaB subfamily. Monomer. [4Fe-4S] cluster serves as cofactor.

It is found in the cytoplasm. It catalyses the reaction N(6)-dimethylallyladenosine(37) in tRNA + (sulfur carrier)-SH + AH2 + 2 S-adenosyl-L-methionine = 2-methylsulfanyl-N(6)-dimethylallyladenosine(37) in tRNA + (sulfur carrier)-H + 5'-deoxyadenosine + L-methionine + A + S-adenosyl-L-homocysteine + 2 H(+). Functionally, catalyzes the methylthiolation of N6-(dimethylallyl)adenosine (i(6)A), leading to the formation of 2-methylthio-N6-(dimethylallyl)adenosine (ms(2)i(6)A) at position 37 in tRNAs that read codons beginning with uridine. The polypeptide is tRNA-2-methylthio-N(6)-dimethylallyladenosine synthase (Geotalea uraniireducens (strain Rf4) (Geobacter uraniireducens)).